A 331-amino-acid chain; its full sequence is ATPase GET3 (331 aa).

32-39 (KGGVGKTT) contributes to the ATP binding site. Residue aspartate 61 is part of the active site. Glutamate 235 and asparagine 262 together coordinate ATP. Residues cysteine 273 and cysteine 276 each coordinate Zn(2+).

The protein belongs to the arsA ATPase family. Homodimer.

Its subcellular location is the cytoplasm. It is found in the endoplasmic reticulum. Functionally, ATPase required for the post-translational delivery of tail-anchored (TA) proteins to the endoplasmic reticulum. Recognizes and selectively binds the transmembrane domain of TA proteins in the cytosol. This complex then targets to the endoplasmic reticulum by membrane-bound receptors, where the tail-anchored protein is released for insertion. This process is regulated by ATP binding and hydrolysis. ATP binding drives the homodimer towards the closed dimer state, facilitating recognition of newly synthesized TA membrane proteins. ATP hydrolysis is required for insertion. Subsequently, the homodimer reverts towards the open dimer state, lowering its affinity for the membrane-bound receptor, and returning it to the cytosol to initiate a new round of targeting. This Malassezia globosa (strain ATCC MYA-4612 / CBS 7966) (Dandruff-associated fungus) protein is ATPase GET3.